We begin with the raw amino-acid sequence, 678 residues long: Growth arrest-specific protein 6 (678 aa).

Residues 1–30 form the signal peptide; sequence MAPSLSPGPAALRRAPQLLLLLLAAECALA. In terms of domain architecture, Gla spans 53 to 94; it reads FEEAKQGHLERECVEELCSREEAREVFENDPETDYFYPRYLD. Cysteine 65 and cysteine 70 form a disulfide bridge. At serine 71 the chain carries Phosphoserine; by FAM20C. The region spanning 116–154 is the EGF-like 1; calcium-binding domain; it reads LPDQCTPNPCDRKGTQACQDLMGNFFCLCKAGWGGRLCD. 14 cysteine pairs are disulfide-bonded: cysteine 120/cysteine 133, cysteine 125/cysteine 142, cysteine 144/cysteine 153, cysteine 160/cysteine 171, cysteine 167/cysteine 180, cysteine 182/cysteine 195, cysteine 201/cysteine 212, cysteine 207/cysteine 221, cysteine 223/cysteine 236, cysteine 242/cysteine 251, cysteine 247/cysteine 260, cysteine 262/cysteine 277, cysteine 283/cysteine 570, and cysteine 444/cysteine 470. In terms of domain architecture, EGF-like 2; calcium-binding spans 156–196; sequence DVNECSQENGGCLQICHNKPGSFHCSCHSGFELSSDGRTCQ. The region spanning 197-237 is the EGF-like 3; calcium-binding domain; it reads DIDECADSEACGEARCKNLPGSYSCLCDEGFAYSSQEKACR. Residues 238 to 278 enclose the EGF-like 4; calcium-binding domain; it reads DVDECLQGRCEQVCVNSPGSYTCHCDGRGGLKLSQDMDTCE. 2 consecutive Laminin G-like domains span residues 298–470 and 477–670; these read GRMF…RMQC and GSFY…AHSC. Aspartate 329 and glutamate 331 together coordinate Ca(2+). A glycan (N-linked (GlcNAc...) asparagine) is linked at asparagine 420. Ca(2+) is bound at residue arginine 440. Phosphothreonine occurs at positions 621 and 637. At tyrosine 640 the chain carries Phosphotyrosine. Cysteine 643 and cysteine 670 form a disulfide bridge. Aspartate 656 provides a ligand contact to Ca(2+).

In terms of assembly, heterodimer and heterotetramer with AXL. Post-translationally, proteolytically processed after secretion to yield a N-terminal 36 kDa protein and a C-terminal 50 kDa protein including the laminin G-like domains which activates AXL. In terms of processing, gamma-carboxyglutamate residues are formed by vitamin K dependent carboxylation. These residues are essential for the binding of calcium. In terms of tissue distribution, plasma. Isoform 1 and isoform 2 are widely expressed, isoform 1 being expressed at higher levels than isoform 2 in most tissues. Isoform 2 is the predominant form in spleen.

Its subcellular location is the secreted. Functionally, ligand for tyrosine-protein kinase receptors AXL, TYRO3 and MER whose signaling is implicated in cell growth and survival, cell adhesion and cell migration. GAS6/AXL signaling plays a role in various processes such as endothelial cell survival during acidification by preventing apoptosis, optimal cytokine signaling during human natural killer cell development, hepatic regeneration, gonadotropin-releasing hormone neuron survival and migration, platelet activation, or regulation of thrombotic responses. Its function is as follows. (Microbial infection) Can bridge virus envelope phosphatidylserine to the TAM receptor tyrosine kinase Axl to mediate viral entry by apoptotic mimicry. Plays a role in Dengue cell entry by apoptotic mimicry. Plays a role in Vaccinia virus cell entry by apoptotic mimicry. Plays a role in ebolavirus and marburgvirus cell entry by apoptotic mimicry. The sequence is that of Growth arrest-specific protein 6 from Homo sapiens (Human).